The primary structure comprises 134 residues: Profilin-3 (134 aa).

Cys13 and Cys118 are disulfide-bonded. An Involved in PIP2 interaction motif is present at residues 84-100 (AVIRGKKGSGGITIKKT). Thr114 carries the phosphothreonine modification.

It belongs to the profilin family. In terms of assembly, occurs in many kinds of cells as a complex with monomeric actin in a 1:1 ratio. Phosphorylated by MAP kinases.

The protein localises to the cytoplasm. The protein resides in the cytoskeleton. Binds to actin and affects the structure of the cytoskeleton. At high concentrations, profilin prevents the polymerization of actin, whereas it enhances it at low concentrations. In Olea europaea (Common olive), this protein is Profilin-3.